The chain runs to 559 residues: MNEVENNNHSFPREDIPTEDEIEEEANSRQGILRYFRVARAEYTKFALLGLMFGIIGFIYSFMRILKDMFVMVRQEPTTILFIKIFYILPVSMALVFLIQYMLGTKTVSRIFSIFCGGFASLFFLCGAVFLIEEQVSPSKFLFRDMFIDGKMSSRSLNVFKSMFLTLNEPLATIVFISAEMWGSLVLSYLFLSFLNESCTIRQFSRFIPPLIIITNVSLFLSATVAGAFFKLREKLAFQQNQVLLSGIFIFQGFLVVLVIFLKIYLERVTMKRPLFIVSSGSRRKKAKANVSFSEGLEIMSQSKLLLAMSLIVLFFNISYNMVESTFKVGVKVAAEYFNEEKGKYSGKFNRIDQYMTSVVVICLNLSPFSSYVETRGFLLVGLITPIVTLMAIVLFLGSALYNTSMEESGLGIVNGLFPGGKPLYVLENYFGVIFMSLLKITKYSAFDICKEKLGMRINPTYRARFKSVYDGIFGKLGKSIGSIYGLLMFEALDTEDLRKATPITAGIIFIFIVMWVKAIIYLSRSYESAVQHNRDVDIDMTEKAKKSLETPEEPKVVD.

The span at 1-10 (MNEVENNNHS) shows a compositional bias: polar residues. Residues 1–22 (MNEVENNNHSFPREDIPTEDEI) form a disordered region. Residue Asn-8 is glycosylated (N-linked (GlcNAc...) asparagine). A run of 4 helical transmembrane segments spans residues 46–66 (FALLGLMFGIIGFIYSFMRIL), 79–99 (TILFIKIFYILPVSMALVFLI), 111–131 (IFSIFCGGFASLFFLCGAVFL), and 174–194 (IVFISAEMWGSLVLSYLFLSF). Asn-196 is a glycosylation site (N-linked (GlcNAc...) asparagine). Helical transmembrane passes span 210–230 (PLIIITNVSLFLSATVAGAFF) and 242–262 (QVLLSGIFIFQGFLVVLVIFL). Asn-290 is a glycosylation site (N-linked (GlcNAc...) asparagine). 3 consecutive transmembrane segments (helical) span residues 305–325 (LLLAMSLIVLFFNISYNMVES), 354–373 (QYMTSVVVICLNLSPFSSYV), and 377–397 (GFLLVGLITPIVTLMAIVLFL). N-linked (GlcNAc...) asparagine glycosylation is present at Asn-403. The next 3 membrane-spanning stretches (helical) occupy residues 425–447 (YVLENYFGVIFMSLLKITKYSAF), 473–493 (IFGKLGKSIGSIYGLLMFEAL), and 503–523 (PITAGIIFIFIVMWVKAIIYL).

The protein belongs to the ADP/ATP translocase tlc family.

The protein localises to the cell membrane. Functionally, ATP transporter involved in the uptake of ATP from the host cell cytoplasm. Provides the microsporidian cell with host ATP in exchange for ADP. This is an obligate exchange system. This energy acquiring activity is an important component of microsporidian parasitism. This Encephalitozoon cuniculi (strain GB-M1) (Microsporidian parasite) protein is ADP,ATP carrier protein 1 (NTT1).